A 441-amino-acid chain; its full sequence is Signal recognition particle 54 kDa protein (441 aa).

Residues 104–111 (GLQGSGKT), 186–190 (DTAGR), and 244–247 (TKLD) contribute to the GTP site.

It belongs to the GTP-binding SRP family. SRP54 subfamily. In terms of assembly, part of the signal recognition particle protein translocation system, which is composed of SRP and FtsY. Archaeal SRP consists of a 7S RNA molecule of 300 nucleotides and two protein subunits: SRP54 and SRP19.

The protein resides in the cytoplasm. It catalyses the reaction GTP + H2O = GDP + phosphate + H(+). Involved in targeting and insertion of nascent membrane proteins into the cytoplasmic membrane. Binds to the hydrophobic signal sequence of the ribosome-nascent chain (RNC) as it emerges from the ribosomes. The SRP-RNC complex is then targeted to the cytoplasmic membrane where it interacts with the SRP receptor FtsY. This is Signal recognition particle 54 kDa protein from Staphylothermus marinus (strain ATCC 43588 / DSM 3639 / JCM 9404 / F1).